The chain runs to 492 residues: Probable protein phosphatase 2C 33 (492 aa).

Positions 1–46 (MGSCLSAESRSPRPGSPCSPAFSVRKRKNSKKRPGSRNSSFDYRRE) are disordered. Residues 24-35 (VRKRKNSKKRPG) show a composition bias toward basic residues. The region spanning 64-393 (VACIYTQQGK…DDCAAVCLYL (330 aa)) is the PPM-type phosphatase domain. The Mn(2+) site is built by D100, G101, D338, and D384. The segment at 406 to 468 (SISKLEDGEE…ADNLDSEPGT (63 aa)) is disordered. Positions 412-427 (DGEEEELKATTEDDDA) are enriched in acidic residues. Over residues 441 to 460 (SGKEIALDESETEKLIKEAD) the composition is skewed to basic and acidic residues.

The protein belongs to the PP2C family. Requires Mg(2+) as cofactor. The cofactor is Mn(2+).

It carries out the reaction O-phospho-L-seryl-[protein] + H2O = L-seryl-[protein] + phosphate. It catalyses the reaction O-phospho-L-threonyl-[protein] + H2O = L-threonyl-[protein] + phosphate. The sequence is that of Probable protein phosphatase 2C 33 (PPC6-1) from Arabidopsis thaliana (Mouse-ear cress).